Consider the following 449-residue polypeptide: Kynurenine 3-monooxygenase (449 aa).

It belongs to the aromatic-ring hydroxylase family. KMO subfamily. FAD is required as a cofactor.

The enzyme catalyses L-kynurenine + NADPH + O2 + H(+) = 3-hydroxy-L-kynurenine + NADP(+) + H2O. It functions in the pathway cofactor biosynthesis; NAD(+) biosynthesis; quinolinate from L-kynurenine: step 1/3. Catalyzes the hydroxylation of L-kynurenine (L-Kyn) to form 3-hydroxy-L-kynurenine (L-3OHKyn). Required for synthesis of quinolinic acid. The protein is Kynurenine 3-monooxygenase of Legionella pneumophila (strain Lens).